A 193-amino-acid polypeptide reads, in one-letter code: 7-methyl-GTP pyrophosphatase (193 aa).

Aspartate 70 (proton acceptor) is an active-site residue.

Belongs to the Maf family. YceF subfamily. Requires a divalent metal cation as cofactor.

Its subcellular location is the cytoplasm. The enzyme catalyses N(7)-methyl-GTP + H2O = N(7)-methyl-GMP + diphosphate + H(+). Nucleoside triphosphate pyrophosphatase that hydrolyzes 7-methyl-GTP (m(7)GTP). May have a dual role in cell division arrest and in preventing the incorporation of modified nucleotides into cellular nucleic acids. This is 7-methyl-GTP pyrophosphatase from Vibrio parahaemolyticus serotype O3:K6 (strain RIMD 2210633).